Here is a 501-residue protein sequence, read N- to C-terminus: Probable cytosol aminopeptidase (501 aa).

Residues K268 and D273 each contribute to the Mn(2+) site. The active site involves K280. Mn(2+)-binding residues include D291, D350, and E352. The active site involves R354.

Belongs to the peptidase M17 family. Requires Mn(2+) as cofactor.

Its subcellular location is the cytoplasm. The enzyme catalyses Release of an N-terminal amino acid, Xaa-|-Yaa-, in which Xaa is preferably Leu, but may be other amino acids including Pro although not Arg or Lys, and Yaa may be Pro. Amino acid amides and methyl esters are also readily hydrolyzed, but rates on arylamides are exceedingly low.. It catalyses the reaction Release of an N-terminal amino acid, preferentially leucine, but not glutamic or aspartic acids.. Functionally, presumably involved in the processing and regular turnover of intracellular proteins. Catalyzes the removal of unsubstituted N-terminal amino acids from various peptides. The chain is Probable cytosol aminopeptidase from Idiomarina loihiensis (strain ATCC BAA-735 / DSM 15497 / L2-TR).